The following is a 160-amino-acid chain: Cell division protein SepF (160 aa).

The span at 18–30 (AEGEDDFEDDVDT) shows a compositional bias: acidic residues. The disordered stretch occupies residues 18 to 72 (AEGEDDFEDDVDTGETSFDSDHSVTPMPSSSASASTPSAPREQSNPFQGGRVSRI). Over residues 45 to 57 (PSSSASASTPSAP) the composition is skewed to low complexity.

It belongs to the SepF family. In terms of assembly, homodimer. Interacts with FtsZ.

It localises to the cytoplasm. Functionally, cell division protein that is part of the divisome complex and is recruited early to the Z-ring. Probably stimulates Z-ring formation, perhaps through the cross-linking of FtsZ protofilaments. Its function overlaps with FtsA. This Bifidobacterium adolescentis (strain ATCC 15703 / DSM 20083 / NCTC 11814 / E194a) protein is Cell division protein SepF.